Consider the following 179-residue polypeptide: Large ribosomal subunit protein uL5 (179 aa).

The protein belongs to the universal ribosomal protein uL5 family. In terms of assembly, part of the 50S ribosomal subunit; part of the 5S rRNA/L5/L18/L25 subcomplex. Contacts the 5S rRNA and the P site tRNA. Forms a bridge to the 30S subunit in the 70S ribosome.

In terms of biological role, this is one of the proteins that bind and probably mediate the attachment of the 5S RNA into the large ribosomal subunit, where it forms part of the central protuberance. In the 70S ribosome it contacts protein S13 of the 30S subunit (bridge B1b), connecting the 2 subunits; this bridge is implicated in subunit movement. Contacts the P site tRNA; the 5S rRNA and some of its associated proteins might help stabilize positioning of ribosome-bound tRNAs. In Shewanella sp. (strain ANA-3), this protein is Large ribosomal subunit protein uL5.